The sequence spans 247 residues: ATP synthase subunit a, chloroplastic (247 aa).

Helical transmembrane passes span 38 to 58, 95 to 115, 134 to 154, 199 to 219, and 220 to 240; these read QVLITSWVVIAILLGSAALAV, VPFIGTMFLFIFVSNWSGALL, INTTVALALLTSVAYFYAGLT, LVVVVLVSLVPSVVPIPVMFL, and GLFTSGIQALIFATLAAAYIG.

Belongs to the ATPase A chain family. F-type ATPases have 2 components, CF(1) - the catalytic core - and CF(0) - the membrane proton channel. CF(1) has five subunits: alpha(3), beta(3), gamma(1), delta(1), epsilon(1). CF(0) has four main subunits: a, b, b' and c.

The protein resides in the plastid. It is found in the chloroplast thylakoid membrane. In terms of biological role, key component of the proton channel; it plays a direct role in the translocation of protons across the membrane. The polypeptide is ATP synthase subunit a, chloroplastic (Helianthus annuus (Common sunflower)).